Consider the following 243-residue polypeptide: Probable transcriptional regulatory protein Smal_3128 (243 aa).

It belongs to the TACO1 family.

It localises to the cytoplasm. In Stenotrophomonas maltophilia (strain R551-3), this protein is Probable transcriptional regulatory protein Smal_3128.